Consider the following 207-residue polypeptide: Protein THEM6 (207 aa).

Positions 1–21 (MLELLVASLSLALAFFALLDG) are cleaved as a signal peptide. Residue asparagine 188 is glycosylated (N-linked (GlcNAc...) asparagine). Serine 199 bears the Phosphoserine mark.

The protein belongs to the THEM6 family.

Its subcellular location is the secreted. This chain is Protein THEM6 (Them6), found in Mus musculus (Mouse).